The following is a 475-amino-acid chain: Adenylyl cyclase-associated protein 1 (475 aa).

Alanine 2 is subject to N-acetylalanine. Tyrosine 31 carries the post-translational modification Phosphotyrosine. Serine 34 bears the Phosphoserine mark. Lysine 81 is modified (N6-acetyllysine). 2 disordered regions span residues 216 to 255 (ELSG…ASRS) and 278 to 318 (MKTH…TKKE). The span at 218-228 (SGLPSGPSAGS) shows a compositional bias: low complexity. The span at 229-242 (GPPPPPPGPPPPPV) shows a compositional bias: pro residues. Low complexity predominate over residues 243-255 (STSSGSDESASRS). Position 287 is an N6-methyllysine (lysine 287). Phosphoserine is present on residues serine 290, serine 295, and serine 301. Threonine 307 is subject to Phosphothreonine. A phosphoserine mark is found at serine 308 and serine 310. One can recognise a C-CAP/cofactor C-like domain in the interval 313–453 (PATKKEPAVL…EGGDFNEFPV (141 aa)). Lysine 348 is covalently cross-linked (Glycyl lysine isopeptide (Lys-Gly) (interchain with G-Cter in SUMO1)).

The protein belongs to the CAP family. Homodimer. Binds actin monomers.

The protein localises to the cell membrane. Directly regulates filament dynamics and has been implicated in a number of complex developmental and morphological processes, including mRNA localization and the establishment of cell polarity. The sequence is that of Adenylyl cyclase-associated protein 1 (CAP1) from Pongo abelii (Sumatran orangutan).